We begin with the raw amino-acid sequence, 502 residues long: ATP synthase subunit alpha (502 aa).

169–176 contributes to the ATP binding site; the sequence is GDRQTGKT.

This sequence belongs to the ATPase alpha/beta chains family. As to quaternary structure, F-type ATPases have 2 components, CF(1) - the catalytic core - and CF(0) - the membrane proton channel. CF(1) has five subunits: alpha(3), beta(3), gamma(1), delta(1), epsilon(1). CF(0) has three main subunits: a(1), b(2) and c(9-12). The alpha and beta chains form an alternating ring which encloses part of the gamma chain. CF(1) is attached to CF(0) by a central stalk formed by the gamma and epsilon chains, while a peripheral stalk is formed by the delta and b chains.

Its subcellular location is the cell membrane. It catalyses the reaction ATP + H2O + 4 H(+)(in) = ADP + phosphate + 5 H(+)(out). Its function is as follows. Produces ATP from ADP in the presence of a proton gradient across the membrane. The alpha chain is a regulatory subunit. The protein is ATP synthase subunit alpha of Clostridium perfringens (strain SM101 / Type A).